A 128-amino-acid chain; its full sequence is Aspartate 1-decarboxylase (128 aa).

Catalysis depends on S25, which acts as the Schiff-base intermediate with substrate; via pyruvic acid. Residue S25 is modified to Pyruvic acid (Ser). T57 contributes to the substrate binding site. The Proton donor role is filled by Y58. G73 to A75 is a binding site for substrate.

The protein belongs to the PanD family. As to quaternary structure, heterooctamer of four alpha and four beta subunits. It depends on pyruvate as a cofactor. Post-translationally, is synthesized initially as an inactive proenzyme, which is activated by self-cleavage at a specific serine bond to produce a beta-subunit with a hydroxyl group at its C-terminus and an alpha-subunit with a pyruvoyl group at its N-terminus.

The protein resides in the cytoplasm. The catalysed reaction is L-aspartate + H(+) = beta-alanine + CO2. It functions in the pathway cofactor biosynthesis; (R)-pantothenate biosynthesis; beta-alanine from L-aspartate: step 1/1. In terms of biological role, catalyzes the pyruvoyl-dependent decarboxylation of aspartate to produce beta-alanine. The protein is Aspartate 1-decarboxylase of Paraburkholderia phymatum (strain DSM 17167 / CIP 108236 / LMG 21445 / STM815) (Burkholderia phymatum).